Consider the following 202-residue polypeptide: Thymidylate kinase (202 aa).

7–14 (GIDGSGKT) lines the ATP pocket.

Belongs to the thymidylate kinase family.

It catalyses the reaction dTMP + ATP = dTDP + ADP. Phosphorylation of dTMP to form dTDP in both de novo and salvage pathways of dTTP synthesis. In Ehrlichia ruminantium (strain Gardel), this protein is Thymidylate kinase.